A 116-amino-acid chain; its full sequence is Immunoglobulin heavy variable 3-66 (116 aa).

An N-terminal signal peptide occupies residues 1-19; sequence MEFGLSWVFLVAILKGVQC. Residues 20–44 are framework-1; sequence EVQLVESGGGLIQPGGSLRLSCAAS. The 97-residue stretch at 20 to 116 folds into the Ig-like domain; the sequence is EVQLVESGGG…EDTAVYYCAR (97 aa). Cys41 and Cys114 are oxidised to a cystine. The tract at residues 45 to 52 is complementarity-determining-1; it reads GFTVSSNY. A framework-2 region spans residues 53–69; the sequence is MSWVRQAPGKGLEWVSV. The segment at 70-76 is complementarity-determining-2; that stretch reads IYSCGST. Residues 77–114 are framework-3; sequence YYADSVKGRFTISRDNSKNTLYLQMNSLRAEDTAVYYC. A complementarity-determining-3 region spans residues 115 to 116; sequence AR.

In terms of assembly, immunoglobulins are composed of two identical heavy chains and two identical light chains; disulfide-linked.

It localises to the secreted. Its subcellular location is the cell membrane. V region of the variable domain of immunoglobulin heavy chains that participates in the antigen recognition. Immunoglobulins, also known as antibodies, are membrane-bound or secreted glycoproteins produced by B lymphocytes. In the recognition phase of humoral immunity, the membrane-bound immunoglobulins serve as receptors which, upon binding of a specific antigen, trigger the clonal expansion and differentiation of B lymphocytes into immunoglobulins-secreting plasma cells. Secreted immunoglobulins mediate the effector phase of humoral immunity, which results in the elimination of bound antigens. The antigen binding site is formed by the variable domain of one heavy chain, together with that of its associated light chain. Thus, each immunoglobulin has two antigen binding sites with remarkable affinity for a particular antigen. The variable domains are assembled by a process called V-(D)-J rearrangement and can then be subjected to somatic hypermutations which, after exposure to antigen and selection, allow affinity maturation for a particular antigen. This is Immunoglobulin heavy variable 3-66 from Homo sapiens (Human).